Consider the following 323-residue polypeptide: uncharacterized protein (323 aa).

One can recognise an S4 RNA-binding domain in the interval 16-95 (QRIDQFCLKI…DKLKIIFEDE (80 aa)). D148 is a catalytic residue.

It belongs to the pseudouridine synthase RluA family.

The enzyme catalyses a uridine in RNA = a pseudouridine in RNA. This is an uncharacterized protein from Mycoplasma genitalium (strain ATCC 33530 / DSM 19775 / NCTC 10195 / G37) (Mycoplasmoides genitalium).